A 166-amino-acid polypeptide reads, in one-letter code: NAD(P)H-quinone oxidoreductase subunit I, chloroplastic (166 aa).

2 consecutive 4Fe-4S ferredoxin-type domains span residues 55-84 and 95-124; these read GRIHFEFDKCIACEVCVRVCPIDLPVVDWK and LNYSIDFGICIFCGNCVEYCPTNCLSMTEE. Residues C64, C67, C70, C74, C104, C107, C110, and C114 each contribute to the [4Fe-4S] cluster site.

Belongs to the complex I 23 kDa subunit family. NDH is composed of at least 16 different subunits, 5 of which are encoded in the nucleus. Requires [4Fe-4S] cluster as cofactor.

It is found in the plastid. The protein localises to the chloroplast thylakoid membrane. The enzyme catalyses a plastoquinone + NADH + (n+1) H(+)(in) = a plastoquinol + NAD(+) + n H(+)(out). It carries out the reaction a plastoquinone + NADPH + (n+1) H(+)(in) = a plastoquinol + NADP(+) + n H(+)(out). Functionally, NDH shuttles electrons from NAD(P)H:plastoquinone, via FMN and iron-sulfur (Fe-S) centers, to quinones in the photosynthetic chain and possibly in a chloroplast respiratory chain. The immediate electron acceptor for the enzyme in this species is believed to be plastoquinone. Couples the redox reaction to proton translocation, and thus conserves the redox energy in a proton gradient. This chain is NAD(P)H-quinone oxidoreductase subunit I, chloroplastic, found in Sigesbeckia blakei.